We begin with the raw amino-acid sequence, 203 residues long: Calcineurin B-like protein 5 (203 aa).

Gly-2 carries the N-myristoyl glycine lipid modification. EF-hand domains lie at 30–65 (EVEV…KNTK), 66–101 (KRSL…FHPN), 103–138 (SPRD…VLEE), and 147–182 (IIDS…YPLT).

Belongs to the calcineurin regulatory subunit family. In terms of assembly, homodimer. Interacts with PP2CA, CIPK2, CIPK11, CIPK23 and CIPK24. Post-translationally, both N-myristoylation and calcium-mediated conformational changes are essential for its function. In terms of tissue distribution, expressed in green tissues, but not in the roots.

The protein resides in the cytoplasm. It is found in the nucleus. Its function is as follows. Acts as a calcium sensor. CBL proteins interact with CIPK serine-threonine protein kinases. Binding of a CBL protein to the regulatory NAF domain of a CIPK protein lead to the activation of the kinase in a calcium-dependent manner. May function as a positive regulator of salt or drought responses. This is Calcineurin B-like protein 5 (CBL5) from Arabidopsis thaliana (Mouse-ear cress).